A 151-amino-acid chain; its full sequence is Nucleoside diphosphate kinase (151 aa).

ATP-binding residues include Lys11, Phe59, Arg87, Thr93, Arg104, and Asn114. His117 serves as the catalytic Pros-phosphohistidine intermediate.

Belongs to the NDK family. It depends on Mg(2+) as a cofactor.

The enzyme catalyses a 2'-deoxyribonucleoside 5'-diphosphate + ATP = a 2'-deoxyribonucleoside 5'-triphosphate + ADP. It catalyses the reaction a ribonucleoside 5'-diphosphate + ATP = a ribonucleoside 5'-triphosphate + ADP. Major role in the synthesis of nucleoside triphosphates other than ATP. The ATP gamma phosphate is transferred to the NDP beta phosphate via a ping-pong mechanism, using a phosphorylated active-site intermediate. The polypeptide is Nucleoside diphosphate kinase (NDK1) (Eremothecium gossypii (strain ATCC 10895 / CBS 109.51 / FGSC 9923 / NRRL Y-1056) (Yeast)).